Reading from the N-terminus, the 537-residue chain is Protein ST7 homolog (537 aa).

Residues 15-35 form a helical membrane-spanning segment; that stretch reads FYVALTGTSSLISGLILIFEW. Residues 61-111 form a disordered region; it reads SDGQSESSNGSGSSSSSGSSSSSNGGAGGGGSGGAGASGSGSATTSTGTQM. Positions 67–84 are enriched in low complexity; the sequence is SSNGSGSSSSSGSSSSSN. Residues 85–99 show a composition bias toward gly residues; sequence GGAGGGGSGGAGASG. The segment covering 100–109 has biased composition (low complexity); it reads SGSATTSTGT. Residues 472–492 traverse the membrane as a helical segment; that stretch reads LPFFILFTAGLCSITALLALA.

It belongs to the ST7 family.

It is found in the membrane. In Drosophila melanogaster (Fruit fly), this protein is Protein ST7 homolog.